The following is a 244-amino-acid chain: Cobalt transport protein CbiM (244 aa).

Positions Met-1 to Ala-28 are cleaved as a signal peptide. 6 consecutive transmembrane segments (helical) span residues Pro-37–Ile-57, Leu-71–Val-91, Leu-103–Phe-123, Thr-135–Tyr-155, Ser-166–Val-186, and Phe-206–Val-226.

The protein belongs to the CbiM family. Forms an energy-coupling factor (ECF) transporter complex composed of an ATP-binding protein (A component, CbiO), a transmembrane protein (T component, CbiQ) and 2 possible substrate-capture proteins (S components, CbiM and CbiN) of unknown stoichimetry.

It localises to the cell membrane. The protein operates within cofactor biosynthesis; adenosylcobalamin biosynthesis. Functionally, part of the energy-coupling factor (ECF) transporter complex CbiMNOQ involved in cobalt import. The protein is Cobalt transport protein CbiM of Listeria seeligeri serovar 1/2b (strain ATCC 35967 / DSM 20751 / CCM 3970 / CCUG 15530 / CIP 100100 / LMG 11386 / NCTC 11856 / SLCC 3954 / 1120).